We begin with the raw amino-acid sequence, 311 residues long: DNA repair and recombination protein RadA (311 aa).

Position 104-111 (104-111 (GEFGSGKS)) interacts with ATP.

The protein belongs to the eukaryotic RecA-like protein family.

In terms of biological role, involved in DNA repair and in homologous recombination. Binds and assemble on single-stranded DNA to form a nucleoprotein filament. Hydrolyzes ATP in a ssDNA-dependent manner and promotes DNA strand exchange between homologous DNA molecules. This is DNA repair and recombination protein RadA from Methanosphaera stadtmanae (strain ATCC 43021 / DSM 3091 / JCM 11832 / MCB-3).